We begin with the raw amino-acid sequence, 299 residues long: 21S rRNA pseudouridine(2819) synthase (299 aa).

The active site involves Asp-106.

The protein belongs to the pseudouridine synthase RluA family.

The protein resides in the mitochondrion. The enzyme catalyses uridine(2819) in 21S rRNA = pseudouridine(2819) in 21S rRNA. In terms of biological role, pseudouridylate synthase responsible for the pseudouridine-2819 formation in mitochondrial 21S rRNA. May modulate the efficiency or the fidelity of the mitochondrial translation machinery. This chain is 21S rRNA pseudouridine(2819) synthase (PUS5), found in Kluyveromyces lactis (strain ATCC 8585 / CBS 2359 / DSM 70799 / NBRC 1267 / NRRL Y-1140 / WM37) (Yeast).